The primary structure comprises 464 residues: ATP synthase subunit beta (464 aa).

Residue 153-160 (GGAGVGKT) participates in ATP binding.

It belongs to the ATPase alpha/beta chains family. In terms of assembly, F-type ATPases have 2 components, CF(1) - the catalytic core - and CF(0) - the membrane proton channel. CF(1) has five subunits: alpha(3), beta(3), gamma(1), delta(1), epsilon(1). CF(0) has three main subunits: a(1), b(2) and c(9-12). The alpha and beta chains form an alternating ring which encloses part of the gamma chain. CF(1) is attached to CF(0) by a central stalk formed by the gamma and epsilon chains, while a peripheral stalk is formed by the delta and b chains.

The protein resides in the cell inner membrane. The catalysed reaction is ATP + H2O + 4 H(+)(in) = ADP + phosphate + 5 H(+)(out). In terms of biological role, produces ATP from ADP in the presence of a proton gradient across the membrane. The catalytic sites are hosted primarily by the beta subunits. This chain is ATP synthase subunit beta, found in Burkholderia cenocepacia (strain ATCC BAA-245 / DSM 16553 / LMG 16656 / NCTC 13227 / J2315 / CF5610) (Burkholderia cepacia (strain J2315)).